The primary structure comprises 382 residues: ATP phosphoribosyltransferase regulatory subunit (382 aa).

Belongs to the class-II aminoacyl-tRNA synthetase family. HisZ subfamily. Heteromultimer composed of HisG and HisZ subunits.

The protein localises to the cytoplasm. Its pathway is amino-acid biosynthesis; L-histidine biosynthesis; L-histidine from 5-phospho-alpha-D-ribose 1-diphosphate: step 1/9. Its function is as follows. Required for the first step of histidine biosynthesis. May allow the feedback regulation of ATP phosphoribosyltransferase activity by histidine. The polypeptide is ATP phosphoribosyltransferase regulatory subunit (Lacticaseibacillus casei (strain BL23) (Lactobacillus casei)).